The primary structure comprises 108 residues: Large ribosomal subunit protein eL36x (108 aa).

Disordered stretches follow at residues 13-34 (GHVV…KTSK) and 75-108 (KLGT…EKKK). A compositionally biased stretch (basic residues) spans 75–84 (KLGTHKRAKR).

It belongs to the eukaryotic ribosomal protein eL36 family.

This Arabidopsis thaliana (Mouse-ear cress) protein is Large ribosomal subunit protein eL36x (RPL36C).